Here is a 370-residue protein sequence, read N- to C-terminus: MVDQGFFTLKKEKKKNILIKLFYVKILGFCFCDSWSSSDMAHSLTSLAVFQSVIRKEMVRSLHVYESVEIEREFWFKSKSCYVEKKAKPLFRSEDFRRPEISEGSVFGTWRCIFVFRFNHSLPRFPTLLCLSRNPKLEDIPNLANELKFISELKPSKIYEEEQCSSSTEGYYNSDLPKPRKLVLKQDLNCLPDSETESEESVNEKTEHSEFENDKTEQSESDAKTEILKKKKRTPSRHVAELSLEELSKYFDLTIVEASRNLKVGLTVLKKKCREFGIPRWPHRKIKSLDCLIHDLQREAEKQQEKNEAAAMAVAKKQEKLETEKRNIVKRPFMEIGIETKKFRQENFKKRHRASRAKKNQESLVTSSST.

Positions 193–232 (DSETESEESVNEKTEHSEFENDKTEQSESDAKTEILKKKK) are disordered. Residues 202-228 (VNEKTEHSEFENDKTEQSESDAKTEIL) show a composition bias toward basic and acidic residues. The RWP-RK domain occupies 224 to 309 (KTEILKKKKR…AEKQQEKNEA (86 aa)). Residues 283–328 (HRKIKSLDCLIHDLQREAEKQQEKNEAAAMAVAKKQEKLETEKRNI) adopt a coiled-coil conformation. Residues 347–370 (NFKKRHRASRAKKNQESLVTSSST) form a disordered region. The segment covering 349 to 358 (KKRHRASRAK) has biased composition (basic residues).

The protein localises to the nucleus. In terms of biological role, putative transcription factor. The protein is Protein RKD5 (RKD5) of Arabidopsis thaliana (Mouse-ear cress).